The primary structure comprises 344 residues: Probable dual-specificity RNA methyltransferase RlmN (344 aa).

Residue Glu-92 is the Proton acceptor of the active site. One can recognise a Radical SAM core domain in the interval 98-325; that stretch reads DEDRATLCVS…TTIRASRGED (228 aa). Cys-105 and Cys-330 form a disulfide bridge. 3 residues coordinate [4Fe-4S] cluster: Cys-112, Cys-116, and Cys-119. Residues 157–158, Ser-189, 211–213, and His-287 each bind S-adenosyl-L-methionine; these read GE and SLH. Cys-330 functions as the S-methylcysteine intermediate in the catalytic mechanism.

This sequence belongs to the radical SAM superfamily. RlmN family. Requires [4Fe-4S] cluster as cofactor.

The protein resides in the cytoplasm. The catalysed reaction is adenosine(2503) in 23S rRNA + 2 reduced [2Fe-2S]-[ferredoxin] + 2 S-adenosyl-L-methionine = 2-methyladenosine(2503) in 23S rRNA + 5'-deoxyadenosine + L-methionine + 2 oxidized [2Fe-2S]-[ferredoxin] + S-adenosyl-L-homocysteine. It catalyses the reaction adenosine(37) in tRNA + 2 reduced [2Fe-2S]-[ferredoxin] + 2 S-adenosyl-L-methionine = 2-methyladenosine(37) in tRNA + 5'-deoxyadenosine + L-methionine + 2 oxidized [2Fe-2S]-[ferredoxin] + S-adenosyl-L-homocysteine. Functionally, specifically methylates position 2 of adenine 2503 in 23S rRNA and position 2 of adenine 37 in tRNAs. The protein is Probable dual-specificity RNA methyltransferase RlmN of Bacteroides fragilis (strain YCH46).